A 166-amino-acid polypeptide reads, in one-letter code: Small heat shock protein OV25-2 (166 aa).

In terms of domain architecture, sHSP spans Leu-38–Ser-149. Residues Ala-140 to Gln-166 form a disordered region.

It belongs to the small heat shock protein (HSP20) family.

This is Small heat shock protein OV25-2 (OV25-2) from Onchocerca volvulus.